Reading from the N-terminus, the 123-residue chain is Small ribosomal subunit protein uS12cz/uS12cy (123 aa).

It belongs to the universal ribosomal protein uS12 family. Part of the 30S ribosomal subunit.

Its subcellular location is the plastid. It is found in the chloroplast. Functionally, with S4 and S5 plays an important role in translational accuracy. Located at the interface of the 30S and 50S subunits. The polypeptide is Small ribosomal subunit protein uS12cz/uS12cy (rps12-A) (Cucumis sativus (Cucumber)).